Reading from the N-terminus, the 197-residue chain is MAVVPIRIVGDPVLHTPTSPVPVGADGSLPADLPELIATMYETMDAAHGVGLAANQIGYGLRLFVYDCADDRGKAAHRRGVVINPVLETSEIPENMPDPDNDDEGCLSVPGESFPTGRATWARVTGLDAEGNPVELEGSGLFARMLQHETGHLDGYLYLDCLIGRHARSAKRAVKSHGWGVPGLSWLPGEGPDPFGH.

Fe cation-binding residues include C106 and H148. E149 is an active-site residue. Position 152 (H152) interacts with Fe cation.

This sequence belongs to the polypeptide deformylase family. The cofactor is Fe(2+).

It catalyses the reaction N-terminal N-formyl-L-methionyl-[peptide] + H2O = N-terminal L-methionyl-[peptide] + formate. Functionally, removes the formyl group from the N-terminal Met of newly synthesized proteins. Requires at least a dipeptide for an efficient rate of reaction. N-terminal L-methionine is a prerequisite for activity but the enzyme has broad specificity at other positions. In Mycobacterium marinum (strain ATCC BAA-535 / M), this protein is Peptide deformylase.